The following is a 505-amino-acid chain: 2,3-bisphosphoglycerate-independent phosphoglycerate mutase (505 aa).

Mn(2+) is bound by residues Asp13 and Ser63. Ser63 acts as the Phosphoserine intermediate in catalysis. Substrate contacts are provided by residues His124, 153–154 (RD), Arg183, Arg189, 254–257 (RADR), and Lys330. Mn(2+) is bound by residues Asp396, His400, Asp437, His438, and His456.

Belongs to the BPG-independent phosphoglycerate mutase family. As to quaternary structure, monomer. Mn(2+) is required as a cofactor.

It carries out the reaction (2R)-2-phosphoglycerate = (2R)-3-phosphoglycerate. Its pathway is carbohydrate degradation; glycolysis; pyruvate from D-glyceraldehyde 3-phosphate: step 3/5. In terms of biological role, catalyzes the interconversion of 2-phosphoglycerate and 3-phosphoglycerate. The sequence is that of 2,3-bisphosphoglycerate-independent phosphoglycerate mutase from Ruegeria pomeroyi (strain ATCC 700808 / DSM 15171 / DSS-3) (Silicibacter pomeroyi).